Consider the following 404-residue polypeptide: Caspase-1 (404 aa).

The region spanning Met1 to Ser91 is the CARD domain. Residues Met1–Pro119 constitute a propeptide that is removed on maturation. Catalysis depends on residues His237 and Cys285. A propeptide spanning residues Ser298–Asp316 is cleaved from the precursor. Position 302 is a phosphoserine (Ser302).

The protein belongs to the peptidase C14A family. As to quaternary structure, heterotetramer that consists of two anti-parallel arranged heterodimers, each one formed by a 20 kDa (Caspase-1 subunit p20) and a 10 kDa (Caspase-1 subunit p10) subunit. May be a component of the inflammasome, a protein complex which also includes PYCARD, CARD8 and NLRP2 and whose function would be the activation of pro-inflammatory caspases. Component of the AIM2 PANoptosome complex, a multiprotein complex that drives inflammatory cell death (PANoptosis). Both the p10 and p20 subunits interact with MEFV. Interacts with CARD17P/INCA and CARD18. Interacts with SERPINB1; this interaction regulates CASP1 activity. In terms of assembly, heterotetramer that consists of two anti-parallel arranged heterodimers, each one formed by a 20 kDa (Caspase-1 subunit p20) and a 10 kDa (Caspase-1 subunit p10) subunit. In terms of processing, the two subunits are derived from the precursor sequence by an autocatalytic mechanism. Ubiquitinated via 'Lys-11'-linked polyubiquitination. Deubiquitinated by USP8.

The protein resides in the cytoplasm. It is found in the cell membrane. The catalysed reaction is Strict requirement for an Asp residue at position P1 and has a preferred cleavage sequence of Tyr-Val-Ala-Asp-|-.. Its function is as follows. Thiol protease involved in a variety of inflammatory processes by proteolytically cleaving other proteins, such as the precursors of the inflammatory cytokines interleukin-1 beta (IL1B) and interleukin 18 (IL18) as well as the pyroptosis inducer Gasdermin-D (GSDMD), into active mature peptides. Plays a key role in cell immunity as an inflammatory response initiator: once activated through formation of an inflammasome complex, it initiates a pro-inflammatory response through the cleavage of the two inflammatory cytokines IL1B and IL18, releasing the mature cytokines which are involved in a variety of inflammatory processes. Cleaves a tetrapeptide after an Asp residue at position P1. Also initiates pyroptosis, a programmed lytic cell death pathway, through cleavage of GSDMD. In contrast to cleavage of interleukin IL1B, recognition and cleavage of GSDMD is not strictly dependent on the consensus cleavage site but depends on an exosite interface on CASP1 that recognizes and binds the Gasdermin-D, C-terminal (GSDMD-CT) part. Cleaves and activates CASP7 in response to bacterial infection, promoting plasma membrane repair. Upon inflammasome activation, during DNA virus infection but not RNA virus challenge, controls antiviral immunity through the cleavage of CGAS, rendering it inactive. In apoptotic cells, cleaves SPHK2 which is released from cells and remains enzymatically active extracellularly. The sequence is that of Caspase-1 (CASP1) from Canis lupus familiaris (Dog).